Reading from the N-terminus, the 347-residue chain is Phenylalanine--tRNA ligase alpha subunit (347 aa).

Mg(2+) is bound at residue Glu-265.

It belongs to the class-II aminoacyl-tRNA synthetase family. Phe-tRNA synthetase alpha subunit type 1 subfamily. As to quaternary structure, tetramer of two alpha and two beta subunits. It depends on Mg(2+) as a cofactor.

The protein resides in the cytoplasm. It carries out the reaction tRNA(Phe) + L-phenylalanine + ATP = L-phenylalanyl-tRNA(Phe) + AMP + diphosphate + H(+). This chain is Phenylalanine--tRNA ligase alpha subunit, found in Mycolicibacterium vanbaalenii (strain DSM 7251 / JCM 13017 / BCRC 16820 / KCTC 9966 / NRRL B-24157 / PYR-1) (Mycobacterium vanbaalenii).